The chain runs to 141 residues: Large ribosomal subunit protein uL22 (141 aa).

The segment at 108 to 141 is disordered; sequence KSEEKKTVAKKTTTTKAPAKKTTSTKKATVKKES. Residues 117–134 show a composition bias toward low complexity; the sequence is KKTTTTKAPAKKTTSTKK.

Belongs to the universal ribosomal protein uL22 family. Part of the 50S ribosomal subunit.

This protein binds specifically to 23S rRNA; its binding is stimulated by other ribosomal proteins, e.g. L4, L17, and L20. It is important during the early stages of 50S assembly. It makes multiple contacts with different domains of the 23S rRNA in the assembled 50S subunit and ribosome. Functionally, the globular domain of the protein is located near the polypeptide exit tunnel on the outside of the subunit, while an extended beta-hairpin is found that lines the wall of the exit tunnel in the center of the 70S ribosome. The protein is Large ribosomal subunit protein uL22 of Campylobacter jejuni subsp. jejuni serotype O:2 (strain ATCC 700819 / NCTC 11168).